The primary structure comprises 247 residues: ATP synthase subunit a, chloroplastic (247 aa).

The next 5 helical transmembrane spans lie at 38-58 (QVLI…TIAV), 95-115 (VPFI…GALL), 134-154 (INTT…AGLT), 199-219 (LVVV…VMLL), and 220-240 (GLFT…AYIG).

Belongs to the ATPase A chain family. F-type ATPases have 2 components, CF(1) - the catalytic core - and CF(0) - the membrane proton channel. CF(1) has five subunits: alpha(3), beta(3), gamma(1), delta(1), epsilon(1). CF(0) has four main subunits: a, b, b' and c.

The protein localises to the plastid. It is found in the chloroplast thylakoid membrane. Key component of the proton channel; it plays a direct role in the translocation of protons across the membrane. This is ATP synthase subunit a, chloroplastic from Nicotiana sylvestris (Wood tobacco).